We begin with the raw amino-acid sequence, 304 residues long: Capsid protein (304 aa).

Composition is skewed to basic and acidic residues over residues Met1–Arg24 and Phe32–Leu54. The disordered stretch occupies residues Met1–Leu54.

It belongs to the potexviruses coat protein family.

It localises to the virion. Required for genome encapsidation. Forms ribonucleoprotein complexes along with TGB1 helicase and viral RNA. The chain is Capsid protein from Potato virus M (strain Russian) (PVM).